The sequence spans 234 residues: UPF0502 protein BPSS1373 (234 aa).

This sequence belongs to the UPF0502 family.

This Burkholderia pseudomallei (strain K96243) protein is UPF0502 protein BPSS1373.